The chain runs to 834 residues: ABC transporter A family member 11 (834 aa).

The next 7 membrane-spanning stretches (helical) occupy residues 35 to 55, 188 to 208, 235 to 255, 269 to 289, 297 to 319, 324 to 346, and 355 to 375; these read FFIL…ILNN, MPMI…ILIV, VFDY…LYSF, FLLF…LQFI, NKWL…SVAF, PLIV…LKAL, and SYTI…IYFI. One can recognise an ABC transporter domain in the interval 452 to 693; the sequence is LDKPSIIERC…YGSGYTIDII (242 aa). 495–502 contacts ATP; the sequence is GPNGSGKS. Residues 779-789 are compositionally biased toward polar residues; that stretch reads KQQTNNKSNII. The segment at 779 to 834 is disordered; sequence KQQTNNKSNIINNNNNNNNNNNNNNNNNNNNNNNNNNNNNNNNNTNNNTNNNQLIN. Over residues 790–834 the composition is skewed to low complexity; that stretch reads NNNNNNNNNNNNNNNNNNNNNNNNNNNNNNNNNTNNNTNNNQLIN.

The protein belongs to the ABC transporter superfamily. ABCA family.

It is found in the membrane. This Dictyostelium discoideum (Social amoeba) protein is ABC transporter A family member 11 (abcA11).